The following is a 355-amino-acid chain: MALRLLKLAATSASARVVAAGAQRVRGVHSSVQCKLRYGMWHFLLGDKASKRLTERSRVITVDGNICTGKGKLAKEIAEKLGFKHFPEAGIHYPDSTTGDGKPLAADYNGNCSLEKFYDDPRSNDGNSYRLQSWLYSSRLLQYSDALEHLLTTGQGVVLERSIFSDFVFLEAMYNQGFIRKQCVDHYNEVKSVTICDYLPPHLVIYIDVPVPEVQRRIQKKGDPHEMKITSAYLQDIENAYKKTFLPEMSEKCEVLQYSAREAQDSKKAVEDIEYLKFDKGPWLKQDNRTLYHLRLLVQDKFEVLNYTSIPIFLPEVTIGAHQTDRVLHQFRELPGRKYSPGYNTEVGDKWIWLK.

The N-terminal 35 residues, 1 to 35 (MALRLLKLAATSASARVVAAGAQRVRGVHSSVQCK), are a transit peptide targeting the mitochondrion. Position 250 is a phosphoserine; by PINK1 (Ser250). An N6-succinyllysine modification is found at Lys285.

It belongs to the complex I NDUFA10 subunit family. In terms of assembly, complex I is composed of 45 different subunits. This a component of the hydrophobic protein fraction. FAD is required as a cofactor. In terms of processing, phosphorylation at Ser-250 by PINK1 is required for the binding and/or reduction of the complex I substrate ubiquinone.

The protein resides in the mitochondrion matrix. In terms of biological role, accessory subunit of the mitochondrial membrane respiratory chain NADH dehydrogenase (Complex I), that is believed not to be involved in catalysis. Complex I functions in the transfer of electrons from NADH to the respiratory chain. The immediate electron acceptor for the enzyme is believed to be ubiquinone. This chain is NADH dehydrogenase [ubiquinone] 1 alpha subcomplex subunit 10, mitochondrial (NDUFA10), found in Pan troglodytes (Chimpanzee).